Here is a 254-residue protein sequence, read N- to C-terminus: tRNA (guanine-N(1)-)-methyltransferase (254 aa).

S-adenosyl-L-methionine is bound by residues Gly113 and 133 to 138; that span reads LGDFVL.

This sequence belongs to the RNA methyltransferase TrmD family. As to quaternary structure, homodimer.

The protein localises to the cytoplasm. The catalysed reaction is guanosine(37) in tRNA + S-adenosyl-L-methionine = N(1)-methylguanosine(37) in tRNA + S-adenosyl-L-homocysteine + H(+). Its function is as follows. Specifically methylates guanosine-37 in various tRNAs. This chain is tRNA (guanine-N(1)-)-methyltransferase, found in Herpetosiphon aurantiacus (strain ATCC 23779 / DSM 785 / 114-95).